Reading from the N-terminus, the 585-residue chain is Arginine--tRNA ligase (585 aa).

The 'HIGH' region motif lies at 127–137; it reads PNTNKPLHVGH.

It belongs to the class-I aminoacyl-tRNA synthetase family. As to quaternary structure, monomer.

It localises to the cytoplasm. The catalysed reaction is tRNA(Arg) + L-arginine + ATP = L-arginyl-tRNA(Arg) + AMP + diphosphate. The sequence is that of Arginine--tRNA ligase from Borrelia duttonii (strain Ly).